A 121-amino-acid polypeptide reads, in one-letter code: MENQKQRLGRLAEDAAQAFLENQGFTIVERNYRTRVAEIDIVAKEAETLVFVEVKARGAFSRGGPREAVSLAKQQKIILGARFFLMERGLVDVRVRFDVVAVYEENNAFRIELIRNAFQTD.

The protein belongs to the UPF0102 family.

This chain is UPF0102 protein HRM2_30940, found in Desulforapulum autotrophicum (strain ATCC 43914 / DSM 3382 / VKM B-1955 / HRM2) (Desulfobacterium autotrophicum).